The sequence spans 776 residues: DNA ligase (776 aa).

NAD(+) is bound by residues 31-35 (DAEYD), 80-81 (SL), and E112. K114 acts as the N6-AMP-lysine intermediate in catalysis. The NAD(+) site is built by R135, E172, K288, and K312. Zn(2+)-binding residues include C406, C409, C436, and C442. In terms of domain architecture, BRCT spans 693–776 (AEGLPLAGQT…TFLAEQGIAV (84 aa)).

The protein belongs to the NAD-dependent DNA ligase family. LigA subfamily. Mg(2+) serves as cofactor. Mn(2+) is required as a cofactor.

It catalyses the reaction NAD(+) + (deoxyribonucleotide)n-3'-hydroxyl + 5'-phospho-(deoxyribonucleotide)m = (deoxyribonucleotide)n+m + AMP + beta-nicotinamide D-nucleotide.. DNA ligase that catalyzes the formation of phosphodiester linkages between 5'-phosphoryl and 3'-hydroxyl groups in double-stranded DNA using NAD as a coenzyme and as the energy source for the reaction. It is essential for DNA replication and repair of damaged DNA. The chain is DNA ligase from Pseudomonas putida (strain ATCC 700007 / DSM 6899 / JCM 31910 / BCRC 17059 / LMG 24140 / F1).